Reading from the N-terminus, the 2153-residue chain is Non-reducing polyketide synthase albA (2153 aa).

Residues 8-244 (YLFGDQTSDI…VKAPIHGPYH (237 aa)) are N-terminal acylcarrier protein transacylase domain (SAT). Positions 375–806 (NSKIAIIGMS…GGNTALLLED (432 aa)) constitute a Ketosynthase family 3 (KS3) domain. Catalysis depends on for beta-ketoacyl synthase activity residues C547, H682, and H724. The tract at residues 912–1232 (FVFTGQGAQY…LASLHLAGID (321 aa)) is malonyl-CoA:ACP transacylase (MAT) domain. S1001 serves as the catalytic For acyl/malonyl transferase activity. The segment at 1286 to 1425 (HEYLTTAAQK…CTVRFFDCAA (140 aa)) is N-terminal hotdog fold. Residues 1286–1598 (HEYLTTAAQK…FQALSRKILD (313 aa)) enclose the PKS/mFAS DH domain. A product template (PT) domain region spans residues 1290 to 1603 (TTAAQKVIET…RKILDTVLPP (314 aa)). H1326 acts as the Proton acceptor; for dehydratase activity in catalysis. Residues 1452 to 1598 (DAHRLGRGMV…FQALSRKILD (147 aa)) are C-terminal hotdog fold. Residue D1511 is the Proton donor; for dehydratase activity of the active site. The interval 1608 to 1643 (KGPARPAASAQKAAPAAAASKSRASAPAPAKPAAKP) is disordered. Residues 1610–1643 (PARPAASAQKAAPAAAASKSRASAPAPAKPAAKP) are compositionally biased toward low complexity. Residues 1643 to 1720 (PSAPSLVKRA…DFKQFLAPMS (78 aa)) enclose the Carrier 1 domain. At S1680 the chain carries O-(pantetheine 4'-phosphoryl)serine. The segment at 1720 to 1765 (SQGEASDGSTSDPESSSSFNGGSSTDESSAGSPVSSPPNEKVTQVE) is disordered. Residues 1725-1748 (SDGSTSDPESSSSFNGGSSTDESS) are compositionally biased toward low complexity. Residues 1749–1765 (AGSPVSSPPNEKVTQVE) are compositionally biased toward polar residues. The Carrier 2 domain occupies 1764–1841 (VEQHATIKEI…DVEDALGLKP (78 aa)). The residue at position 1801 (S1801) is an O-(pantetheine 4'-phosphoryl)serine. Residues 1879-2151 (SPHPRSTSIL…ELGSFIGNAM (273 aa)) are claisen cyclase domain. Residue S1969 is the For Claisen cyclase activity of the active site.

The catalysed reaction is 6 malonyl-CoA + acetyl-CoA + 6 H(+) = naphtopyrone YWA1 + 6 CO2 + 7 CoA + H2O. The protein operates within secondary metabolite biosynthesis. Non-reducing polyketide synthase; part of the gene cluster that mediates the biosynthesis of aurasperone B, a dimeric gamma-naphthopyrone. The first step in the biosynthesis of aurasperone B is the production of gamma-naphthopyrone precursor YWA1 by the non-reducing polyketide synthase albA, via condensation of one acetyl-CoA starter unit with 6 malonyl-CoA units. YWA1 is then methylated by aunE at position C-6 to yield foncesin which is further methylated at position C-8 by aunD to produce fonsecin B. A key enzyme in the biosynthetic pathway is the cytochrome P450 monooxygenase aunB which catalyzes the oxidative dimerization of fonsecin B to aurasperone B. AunB also catalyzes the oxidative dimerization of rubrofusarin B into aurasperone A. In Aspergillus niger (strain ATCC MYA-4892 / CBS 513.88 / FGSC A1513), this protein is Non-reducing polyketide synthase albA.